A 507-amino-acid chain; its full sequence is uncharacterized protein (507 aa).

12 helical membrane passes run 11–31, 97–117, 125–145, 149–169, 187–207, 209–229, 283–303, 326–346, 354–374, 388–408, 423–443, and 452–472; these read ILCF…IFPI, AWIA…YGHL, PVSF…GFAP, VFAV…IVFY, FFNW…CGYW, SAAI…LWLP, LFSS…WFST, FVQA…DLFI, LHQV…ALMI, LAII…WDAC, IGIG…PQMA, and IPYI…CFFL.

The protein belongs to the major facilitator superfamily.

It localises to the membrane. This is an uncharacterized protein from Caenorhabditis elegans.